The sequence spans 248 residues: Protein GrpE (248 aa).

Residues 229-248 form a disordered region; that stretch reads AAPKEDTLPAQENQSSPADS. Positions 238–248 are enriched in polar residues; sequence AQENQSSPADS.

The protein belongs to the GrpE family. In terms of assembly, homodimer.

Its subcellular location is the cytoplasm. Functionally, participates actively in the response to hyperosmotic and heat shock by preventing the aggregation of stress-denatured proteins, in association with DnaK and GrpE. It is the nucleotide exchange factor for DnaK and may function as a thermosensor. Unfolded proteins bind initially to DnaJ; upon interaction with the DnaJ-bound protein, DnaK hydrolyzes its bound ATP, resulting in the formation of a stable complex. GrpE releases ADP from DnaK; ATP binding to DnaK triggers the release of the substrate protein, thus completing the reaction cycle. Several rounds of ATP-dependent interactions between DnaJ, DnaK and GrpE are required for fully efficient folding. The sequence is that of Protein GrpE from Trichormus variabilis (strain ATCC 29413 / PCC 7937) (Anabaena variabilis).